The sequence spans 309 residues: MLPIAIFIIGPTASGKTNLAIKLRQKLPVEIISVDSALIYRGMDIGTAKPNHEELTQAPHRLINICDPAESYSTANFCLDALNEMTVITAAGRIPLLVGGTMLYFKSLLHGLSPLPPANVEIRTLIQREAKAVGWAALHQKLKKIDLVAANRIHPNDSYRLLRALEVFLVSGNTLTEMIQKSGNALKYQVYQFAIMPVNRSLLHDRITRRFHQMLANGFEYEVSQLFARTDLNTNMSSIRCVGYRQMWSYLAGETNYHEMIFRAISATRKLAKHQITWLKSWQNICWLDSEQQDMALNKILQMISKHIS.

10 to 17 (GPTASGKT) contacts ATP. 12–17 (TASGKT) provides a ligand contact to substrate. Interaction with substrate tRNA stretches follow at residues 35 to 38 (DSAL) and 240 to 245 (RCVGYR).

It belongs to the IPP transferase family. Monomer. Mg(2+) serves as cofactor.

It catalyses the reaction adenosine(37) in tRNA + dimethylallyl diphosphate = N(6)-dimethylallyladenosine(37) in tRNA + diphosphate. Functionally, catalyzes the transfer of a dimethylallyl group onto the adenine at position 37 in tRNAs that read codons beginning with uridine, leading to the formation of N6-(dimethylallyl)adenosine (i(6)A). The sequence is that of tRNA dimethylallyltransferase from Baumannia cicadellinicola subsp. Homalodisca coagulata.